Consider the following 600-residue polypeptide: Zinc metalloproteinase-disintegrin-like stejnihagin-B (600 aa).

Positions 1–20 are cleaved as a signal peptide; the sequence is MIEVLLVTICLAVFPYQGSS. A propeptide spanning residues 21-191 is cleaved from the precursor; it reads IILESGNVND…KASQLVVTAE (171 aa). Q192 bears the Pyrrolidone carboxylic acid mark. Residues 198 to 389 form the Peptidase M12B domain; it reads RYVKLAIVAD…YNPQCILNAL (192 aa). Residues N261 and N317 are each glycosylated (N-linked (GlcNAc...) asparagine). 3 cysteine pairs are disulfide-bonded: C306–C384, C346–C368, and C348–C351. Position 331 (H331) interacts with Zn(2+). The active site involves E332. Zn(2+) is bound by residues H335 and H341. The 87-residue stretch at 397–483 folds into the Disintegrin domain; it reads PPVCGNELLE…DCPTDSFHRN (87 aa). Ca(2+) is bound by residues V399, N402, L404, E406, E409, and D412. Cystine bridges form between C400–C429, C411–C424, C413–C419, C423–C446, C437–C443, C442–C468, C455–C475, C462–C494, C487–C499, C506–C556, C521–C565, C534–C544, C551–C587, and C581–C593. A glycan (N-linked (GlcNAc...) asparagine) is linked at N425. A D/ECD-tripeptide motif is present at residues 461 to 463; it reads ECD. N467 carries N-linked (GlcNAc...) asparagine glycosylation. Residue N513 is glycosylated (N-linked (GlcNAc...) asparagine).

This sequence belongs to the venom metalloproteinase (M12B) family. P-III subfamily. P-IIIa sub-subfamily. Monomer. Zn(2+) is required as a cofactor. In terms of tissue distribution, expressed by the venom gland.

The protein localises to the secreted. Its function is as follows. This metalloproteinase-disintegrin-like impairs hemostasis in the envenomed animal. This chain is Zinc metalloproteinase-disintegrin-like stejnihagin-B, found in Trimeresurus stejnegeri (Chinese green tree viper).